Reading from the N-terminus, the 643-residue chain is Long-chain fatty acid transport protein 4 (643 aa).

Transmembrane regions (helical) follow at residues 20-42 (LPWTQVGFSLLFLYLGSGGWRFI) and 139-156 (FVGLWLGMAKLGVEAALI). 243 to 254 (YIYTSGTTGLPK) provides a ligand contact to AMP.

This sequence belongs to the ATP-dependent AMP-binding enzyme family. As to expression, expressed at highest levels in brain, testis, colon and kidney. Expressed at medium levels in heart and liver, small intestine and stomach. Expressed at low levels in peripheral leukocytes, bone marrow, skeletal muscle and aorta. Expressed in adipose tissue. Expressed in brain gray matter.

The protein localises to the endoplasmic reticulum membrane. The enzyme catalyses a fatty acid(in) = a fatty acid(out). The catalysed reaction is (9Z,12Z)-octadecadienoate(out) = (9Z,12Z)-octadecadienoate(in). It carries out the reaction (9Z)-octadecenoate(out) = (9Z)-octadecenoate(in). It catalyses the reaction hexadecanoate(out) = hexadecanoate(in). The enzyme catalyses a long-chain fatty acid + ATP + CoA = a long-chain fatty acyl-CoA + AMP + diphosphate. The catalysed reaction is hexadecanoate + ATP + CoA = hexadecanoyl-CoA + AMP + diphosphate. It carries out the reaction (E)-hexadec-2-enoate + ATP + CoA = (2E)-hexadecenoyl-CoA + AMP + diphosphate. It catalyses the reaction (9Z)-octadecenoate + ATP + CoA = (9Z)-octadecenoyl-CoA + AMP + diphosphate. The enzyme catalyses (5Z,8Z,11Z,14Z)-eicosatetraenoate + ATP + CoA = (5Z,8Z,11Z,14Z)-eicosatetraenoyl-CoA + AMP + diphosphate. The catalysed reaction is a very long-chain fatty acid + ATP + CoA = a very long-chain fatty acyl-CoA + AMP + diphosphate. It carries out the reaction tetracosanoate + ATP + CoA = tetracosanoyl-CoA + AMP + diphosphate. Its function is as follows. Mediates the levels of long-chain fatty acids (LCFA) in the cell by facilitating their transport across cell membranes. Appears to be the principal fatty acid transporter in small intestinal enterocytes. Also functions as an acyl-CoA ligase catalyzing the ATP-dependent formation of fatty acyl-CoA using LCFA and very-long-chain fatty acids (VLCFA) as substrates, which prevents fatty acid efflux from cells and might drive more fatty acid uptake. Plays a role in the formation of the epidermal barrier. Required for fat absorption in early embryogenesis. Probably involved in fatty acid transport across the blood barrier. Indirectly inhibits RPE65 via substrate competition and via production of VLCFA derivatives like lignoceroyl-CoA. Prevents light-induced degeneration of rods and cones. The polypeptide is Long-chain fatty acid transport protein 4 (Homo sapiens (Human)).